A 186-amino-acid polypeptide reads, in one-letter code: MAKLILIIVTQILLIAAVVSARKGENFAKTIDKKHFGLRKEKLTHFRVYWHDILSGSNPSSVVINPPISNSSFFGSVTVIDNRLTTEVAVNSTLVGQAQGIYAATGQRDASALMVMNFAFKTGKYNGSSIAILGRNAVLTKVREMPVIGGSGLFRFARGYVEARTMWFDQKSGDATVEYSCYVLHY.

The N-terminal stretch at 1-21 is a signal peptide; the sequence is MAKLILIIVTQILLIAAVVSA. N-linked (GlcNAc...) asparagine glycosylation is found at N70, N91, and N126.

The protein belongs to the plant dirigent protein family. As to quaternary structure, homodimer.

It localises to the secreted. Its subcellular location is the extracellular space. It is found in the apoplast. Functionally, dirigent proteins impart stereoselectivity on the phenoxy radical-coupling reaction, yielding optically active lignans from two molecules of coniferyl alcohol in the biosynthesis of lignans, flavonolignans, and alkaloids and thus plays a central role in plant secondary metabolism. In Arabidopsis thaliana (Mouse-ear cress), this protein is Dirigent protein 7 (DIR7).